The following is a 304-amino-acid chain: GTPase Era (304 aa).

Residues 11-179 (YCGFIAIVGR…QKIVRKSLRE (169 aa)) enclose the Era-type G domain. The interval 19–26 (GRPNVGKS) is G1. 19–26 (GRPNVGKS) is a GTP binding site. The interval 45-49 (QTTRH) is G2. Residues 66–69 (DTPG) form a G3 region. GTP is bound by residues 66-70 (DTPGL) and 128-131 (NKVD). A G4 region spans residues 128 to 131 (NKVD). Residues 158-160 (ISA) are G5. A KH type-2 domain is found at 210-287 (TGEELPYSVT…HLELWVKVKA (78 aa)).

This sequence belongs to the TRAFAC class TrmE-Era-EngA-EngB-Septin-like GTPase superfamily. Era GTPase family. In terms of assembly, monomer.

Its subcellular location is the cytoplasm. It localises to the cell inner membrane. In terms of biological role, an essential GTPase that binds both GDP and GTP, with rapid nucleotide exchange. Plays a role in 16S rRNA processing and 30S ribosomal subunit biogenesis and possibly also in cell cycle regulation and energy metabolism. This Actinobacillus pleuropneumoniae serotype 5b (strain L20) protein is GTPase Era.